The primary structure comprises 628 residues: Vacuolar-sorting receptor 4 (628 aa).

The signal sequence occupies residues 1–24 (MKQLLCYLPWLLLLSLVVSPFNEA). Topologically, residues 25-569 (RFVVEKNSLS…SKTGSQVKSA (545 aa)) are lumenal. The region spanning 56–168 (QYGGSMAGTV…GFGEKLKKAI (113 aa)) is the PA domain. N-linked (GlcNAc...) asparagine glycans are attached at residues Asn148, Asn294, and Asn434. 2 EGF-like domains span residues 416-466 (ETNE…SHCE) and 469-516 (GPGR…KKCE). Cystine bridges form between Cys420–Cys438, Cys427–Cys447, Cys449–Cys465, Cys473–Cys493, Cys480–Cys501, Cys503–Cys515, and Cys545–Cys558. The EGF-like 3; calcium-binding domain maps to 517–559 (DINECKEKKACQCPECSCKNTWGSYECSCSGDLLYMRDHDTCI). A helical membrane pass occupies residues 570–590 (WAAVWLIMLSLGLAAAGAYLV). Over 591 to 628 (YKYRLRQYMDSEIRAIMAQYMPLDSQPEVPNHTNDERA) the chain is Cytoplasmic. The Tyrosine-based internalization motif motif lies at 610–613 (YMPL).

The protein belongs to the VSR (BP-80) family. In terms of tissue distribution, expressed at low levels in seeds, seedlings, roots, stems, leaves, flowers and siliques.

The protein localises to the membrane. The protein resides in the golgi apparatus membrane. It is found in the cytoplasmic vesicle. Its subcellular location is the clathrin-coated vesicle membrane. It localises to the prevacuolar compartment membrane. Functionally, vacuolar-sorting receptor (VSR) involved in clathrin-coated vesicles sorting from Golgi apparatus to vacuoles. This chain is Vacuolar-sorting receptor 4 (VSR4), found in Arabidopsis thaliana (Mouse-ear cress).